Consider the following 507-residue polypeptide: ATP synthase subunit alpha, chloroplastic (507 aa).

170–177 is an ATP binding site; the sequence is GDRQTGKT.

Belongs to the ATPase alpha/beta chains family. In terms of assembly, F-type ATPases have 2 components, CF(1) - the catalytic core - and CF(0) - the membrane proton channel. CF(1) has five subunits: alpha(3), beta(3), gamma(1), delta(1), epsilon(1). CF(0) has four main subunits: a, b, b' and c.

The protein localises to the plastid. Its subcellular location is the chloroplast thylakoid membrane. The catalysed reaction is ATP + H2O + 4 H(+)(in) = ADP + phosphate + 5 H(+)(out). Its function is as follows. Produces ATP from ADP in the presence of a proton gradient across the membrane. The alpha chain is a regulatory subunit. In Daucus carota (Wild carrot), this protein is ATP synthase subunit alpha, chloroplastic.